A 459-amino-acid polypeptide reads, in one-letter code: Diaminopimelate decarboxylase (459 aa).

An N6-(pyridoxal phosphate)lysine modification is found at K89. Pyridoxal 5'-phosphate-binding positions include G271 and 313-316; that span reads EPGR. R316, R357, and Y361 together coordinate substrate. Residue C388 is the Proton donor of the active site. Positions 389 and 418 each coordinate substrate. Pyridoxal 5'-phosphate is bound at residue Y418.

It belongs to the Orn/Lys/Arg decarboxylase class-II family. LysA subfamily. Homodimer. The cofactor is pyridoxal 5'-phosphate.

The catalysed reaction is meso-2,6-diaminopimelate + H(+) = L-lysine + CO2. It participates in amino-acid biosynthesis; L-lysine biosynthesis via DAP pathway; L-lysine from DL-2,6-diaminopimelate: step 1/1. Specifically catalyzes the decarboxylation of meso-diaminopimelate (meso-DAP) to L-lysine. The protein is Diaminopimelate decarboxylase of Corynebacterium efficiens (strain DSM 44549 / YS-314 / AJ 12310 / JCM 11189 / NBRC 100395).